The chain runs to 356 residues: L-Lys-D/L-Arg epimerase (356 aa).

Substrate contacts are provided by residues threonine 135 and 160 to 162 (KVK). Aspartate 190, glutamate 216, and aspartate 241 together coordinate Mg(2+). Substrate contacts are provided by residues lysine 266, aspartate 296, and 319–321 (DLD).

The protein belongs to the mandelate racemase/muconate lactonizing enzyme family. The cofactor is Mg(2+).

Functionally, catalyzes the epimerization of L-Lys-L-Arg to L-Lys-D-Arg. Can also catalyze the epimerization of other cationic dipeptides, such as L-Arg-L-Arg, L-Lys-L-Lys and L-Lys-L-His, but with lower efficiency (in vitro). This is L-Lys-D/L-Arg epimerase from Methylococcus capsulatus (strain ATCC 33009 / NCIMB 11132 / Bath).